A 163-amino-acid polypeptide reads, in one-letter code: SsrA-binding protein (163 aa).

This sequence belongs to the SmpB family.

It is found in the cytoplasm. In terms of biological role, required for rescue of stalled ribosomes mediated by trans-translation. Binds to transfer-messenger RNA (tmRNA), required for stable association of tmRNA with ribosomes. tmRNA and SmpB together mimic tRNA shape, replacing the anticodon stem-loop with SmpB. tmRNA is encoded by the ssrA gene; the 2 termini fold to resemble tRNA(Ala) and it encodes a 'tag peptide', a short internal open reading frame. During trans-translation Ala-aminoacylated tmRNA acts like a tRNA, entering the A-site of stalled ribosomes, displacing the stalled mRNA. The ribosome then switches to translate the ORF on the tmRNA; the nascent peptide is terminated with the 'tag peptide' encoded by the tmRNA and targeted for degradation. The ribosome is freed to recommence translation, which seems to be the essential function of trans-translation. The chain is SsrA-binding protein from Shewanella sp. (strain ANA-3).